Here is a 143-residue protein sequence, read N- to C-terminus: Anti-sigma F factor (143 aa).

Belongs to the anti-sigma-factor family.

It catalyses the reaction L-seryl-[protein] + ATP = O-phospho-L-seryl-[protein] + ADP + H(+). The catalysed reaction is L-threonyl-[protein] + ATP = O-phospho-L-threonyl-[protein] + ADP + H(+). Its function is as follows. Binds to sigma F and blocks its ability to form an RNA polymerase holoenzyme (E-sigma F). Phosphorylates SpoIIAA on a serine residue. This phosphorylation may enable SpoIIAA to act as an anti-anti-sigma factor that counteracts SpoIIAB and thus releases sigma F from inhibition. The polypeptide is Anti-sigma F factor (Clostridium novyi (strain NT)).